A 508-amino-acid chain; its full sequence is Tryptamine 4-monooxygenase (508 aa).

The first 19 residues, 1–19 (MIAVLFSFVIAGCIYYIVS), serve as a signal peptide directing secretion. Position 439 (Cys-439) interacts with heme.

It belongs to the cytochrome P450 family. Requires heme as cofactor.

It catalyses the reaction tryptamine + AH2 + O2 = 4-hydroxytryptamine + A + H2O. Its pathway is secondary metabolite biosynthesis. Cytochrome P450 monooxygenase; part of the gene cluster that mediates the biosynthesis of psilocybin, a psychotropic tryptamine-derived natural product. The first step in the pathway is the decarboxylation of L-tryptophan to tryptamine by the decarboxylase psiD. 4-hydroxy-L-tryptophan is accepted as substrate by psiD as well. The cytochrome P450 monooxygenase psiH then converts tryptamine to 4-hydroxytryptamine. The kinase psiK catalyzes the 4-O-phosphorylation step by converting 4-hydroxytryptamine into norbaeocystin. The methyltransferase psiM then catalyzes iterative methyl transfer to the amino group of norbaeocystin to yield psilocybin via a monomethylated intermediate, baeocystin. The polypeptide is Tryptamine 4-monooxygenase (Psilocybe cubensis (Psychedelic mushroom)).